Reading from the N-terminus, the 87-residue chain is Small ribosomal subunit protein uS17 (87 aa).

It belongs to the universal ribosomal protein uS17 family. Part of the 30S ribosomal subunit.

Functionally, one of the primary rRNA binding proteins, it binds specifically to the 5'-end of 16S ribosomal RNA. The sequence is that of Small ribosomal subunit protein uS17 from Alkalilimnicola ehrlichii (strain ATCC BAA-1101 / DSM 17681 / MLHE-1).